A 312-amino-acid polypeptide reads, in one-letter code: tRNA pseudouridine synthase B (312 aa).

Catalysis depends on aspartate 37, which acts as the Nucleophile.

Belongs to the pseudouridine synthase TruB family. Type 1 subfamily.

It carries out the reaction uridine(55) in tRNA = pseudouridine(55) in tRNA. Functionally, responsible for synthesis of pseudouridine from uracil-55 in the psi GC loop of transfer RNAs. This is tRNA pseudouridine synthase B from Deinococcus geothermalis (strain DSM 11300 / CIP 105573 / AG-3a).